The sequence spans 460 residues: tRNA modification GTPase MnmE (460 aa).

Residues R29, E91, and K132 each coordinate (6S)-5-formyl-5,6,7,8-tetrahydrofolate. The TrmE-type G domain occupies 227–383 (GISIALIGKT…LIDTIIKKCG (157 aa)). K(+) is bound at residue N237. GTP-binding positions include 237–242 (NVGKSS), 256–262 (TNIPGTT), and 281–284 (DTAG). A Mg(2+)-binding site is contributed by S241. K(+)-binding residues include T256, I258, and T261. A Mg(2+)-binding site is contributed by T262. A (6S)-5-formyl-5,6,7,8-tetrahydrofolate-binding site is contributed by K460.

The protein belongs to the TRAFAC class TrmE-Era-EngA-EngB-Septin-like GTPase superfamily. TrmE GTPase family. In terms of assembly, homodimer. Heterotetramer of two MnmE and two MnmG subunits. K(+) serves as cofactor.

The protein resides in the cytoplasm. In terms of biological role, exhibits a very high intrinsic GTPase hydrolysis rate. Involved in the addition of a carboxymethylaminomethyl (cmnm) group at the wobble position (U34) of certain tRNAs, forming tRNA-cmnm(5)s(2)U34. The sequence is that of tRNA modification GTPase MnmE from Prochlorococcus marinus (strain MIT 9301).